The sequence spans 185 residues: Regulatory protein RecX (185 aa).

Belongs to the RecX family.

The protein localises to the cytoplasm. Functionally, modulates RecA activity. In Thermobifida fusca (strain YX), this protein is Regulatory protein RecX.